A 702-amino-acid polypeptide reads, in one-letter code: Polyribonucleotide nucleotidyltransferase 2 (702 aa).

The Mg(2+) site is built by Asp483 and Asp489. The 60-residue stretch at 550-609 folds into the KH domain; that stretch reads PQVTKLKVHPDKVREVIGAGGKVINKIIDETGVKINIENDGTIYIAAPDQESARVALEMI. The 69-residue stretch at 619-687 folds into the S1 motif domain; that stretch reads GEVYTGKVIK…PQGKIGLSRK (69 aa).

It belongs to the polyribonucleotide nucleotidyltransferase family. Mg(2+) serves as cofactor.

Its subcellular location is the cytoplasm. The enzyme catalyses RNA(n+1) + phosphate = RNA(n) + a ribonucleoside 5'-diphosphate. In terms of biological role, involved in mRNA degradation. Catalyzes the phosphorolysis of single-stranded polyribonucleotides processively in the 3'- to 5'-direction. The sequence is that of Polyribonucleotide nucleotidyltransferase 2 from Alkaliphilus metalliredigens (strain QYMF).